A 245-amino-acid polypeptide reads, in one-letter code: Uridylate kinase (245 aa).

12 to 15 (KLSG) provides a ligand contact to ATP. The segment at 20–25 (GEKGVG) is involved in allosteric activation by GTP. Gly54 contributes to the UMP binding site. Gly55 and Arg59 together coordinate ATP. UMP-binding positions include Asp74 and 135 to 142 (IGSPYFST). Residues Asn163, Tyr169, and Asp172 each contribute to the ATP site.

This sequence belongs to the UMP kinase family. In terms of assembly, homohexamer.

Its subcellular location is the cytoplasm. It catalyses the reaction UMP + ATP = UDP + ADP. Its pathway is pyrimidine metabolism; CTP biosynthesis via de novo pathway; UDP from UMP (UMPK route): step 1/1. With respect to regulation, allosterically activated by GTP. Inhibited by UTP. Catalyzes the reversible phosphorylation of UMP to UDP. The polypeptide is Uridylate kinase (Streptococcus thermophilus (strain ATCC BAA-250 / LMG 18311)).